Reading from the N-terminus, the 151-residue chain is Neuroglobin (151 aa).

The region spanning 1–149 (MERPEHELIR…VVQAMSRGWN (149 aa)) is the Globin domain. 2 residues coordinate heme b: His-64 and His-96.

It belongs to the globin family. In terms of assembly, monomer. Homodimer and homotetramer; disulfide-linked. Mainly monomeric but also detected as part of homodimers and homotetramers. Interacts with 14-3-3 proteins; regulates the phosphorylation of NGB. Could interact (ferrous form) with G-alpha(i) proteins (GTP-bound form). In terms of processing, phosphorylated during hypoxia by ERK1/ERK2. Phosphorylation regulates the heme pocket hexacoordination preventing the association of His-64 with the heme metal center. Thereby, promotes the access of dioxygen and nitrite to the heme and stimulates the nitrite reductase activity. Phosphorylation during hypoxia is stabilized by 14-3-3 proteins.

The protein resides in the cytoplasm. Its subcellular location is the cytosol. The protein localises to the mitochondrion matrix. It carries out the reaction Fe(III)-heme b-[protein] + nitric oxide + H2O = Fe(II)-heme b-[protein] + nitrite + 2 H(+). Its function is as follows. Monomeric globin with a bis-histidyl six-coordinate heme-iron atom through which it can bind dioxygen, carbon monoxide and nitric oxide. Could help transport oxygen and increase its availability to the metabolically active neuronal tissues, though its low quantity in tissues as well as its high affinity for dioxygen, which may limit its oxygen-releasing ability, argue against it. The ferrous/deoxygenated form exhibits a nitrite reductase activity and it could produce nitric oxide which in turn inhibits cellular respiration in response to hypoxia. In its ferrous/deoxygenated state, it may also exhibit GDI (Guanine nucleotide Dissociation Inhibitor) activity toward heterotrimeric G-alpha proteins, thereby regulating signal transduction to facilitate neuroprotective responses in the wake of hypoxia and associated oxidative stress. The chain is Neuroglobin from Sus scrofa (Pig).